We begin with the raw amino-acid sequence, 274 residues long: Rhamnulose-1-phosphate aldolase (274 aa).

Glu-117 is a catalytic residue. Zn(2+) contacts are provided by His-141, His-143, and His-212.

It belongs to the aldolase class II family. RhaD subfamily. As to quaternary structure, homotetramer. Zn(2+) is required as a cofactor.

It is found in the cytoplasm. It catalyses the reaction L-rhamnulose 1-phosphate = (S)-lactaldehyde + dihydroxyacetone phosphate. The protein operates within carbohydrate degradation; L-rhamnose degradation; glycerone phosphate from L-rhamnose: step 3/3. In terms of biological role, catalyzes the reversible cleavage of L-rhamnulose-1-phosphate to dihydroxyacetone phosphate (DHAP) and L-lactaldehyde. In Escherichia fergusonii (strain ATCC 35469 / DSM 13698 / CCUG 18766 / IAM 14443 / JCM 21226 / LMG 7866 / NBRC 102419 / NCTC 12128 / CDC 0568-73), this protein is Rhamnulose-1-phosphate aldolase.